The sequence spans 131 residues: UPF0102 protein YraN (131 aa).

A compositionally biased stretch (polar residues) spans Met1 to Thr19. Residues Met1 to Asp21 are disordered.

It belongs to the UPF0102 family.

This chain is UPF0102 protein YraN, found in Shigella flexneri serotype 5b (strain 8401).